The following is a 433-amino-acid chain: Trigger factor (433 aa).

The PPIase FKBP-type domain occupies 161–246; the sequence is GKRVSIDFVG…VNKVEARELP (86 aa).

The protein belongs to the FKBP-type PPIase family. Tig subfamily.

The protein resides in the cytoplasm. It carries out the reaction [protein]-peptidylproline (omega=180) = [protein]-peptidylproline (omega=0). Its function is as follows. Involved in protein export. Acts as a chaperone by maintaining the newly synthesized protein in an open conformation. Functions as a peptidyl-prolyl cis-trans isomerase. The sequence is that of Trigger factor from Vibrio cholerae serotype O1 (strain ATCC 39541 / Classical Ogawa 395 / O395).